Consider the following 373-residue polypeptide: 8-amino-7-oxononanoate synthase (373 aa).

R16 is a binding site for substrate. Position 93-94 (93-94 (GF)) interacts with pyridoxal 5'-phosphate. H118 provides a ligand contact to substrate. Pyridoxal 5'-phosphate contacts are provided by residues S165, 190-193 (DEAH), and 222-225 (TFSK). K225 is subject to N6-(pyridoxal phosphate)lysine. T334 provides a ligand contact to substrate.

Belongs to the class-II pyridoxal-phosphate-dependent aminotransferase family. BioF subfamily. In terms of assembly, homodimer. The cofactor is pyridoxal 5'-phosphate.

It carries out the reaction 6-carboxyhexanoyl-[ACP] + L-alanine + H(+) = (8S)-8-amino-7-oxononanoate + holo-[ACP] + CO2. Its pathway is cofactor biosynthesis; biotin biosynthesis. Its function is as follows. Catalyzes the decarboxylative condensation of pimeloyl-[acyl-carrier protein] and L-alanine to produce 8-amino-7-oxononanoate (AON), [acyl-carrier protein], and carbon dioxide. In Helicobacter pylori (strain J99 / ATCC 700824) (Campylobacter pylori J99), this protein is 8-amino-7-oxononanoate synthase.